A 349-amino-acid chain; its full sequence is Flagellar P-ring protein (349 aa).

The N-terminal stretch at 1–20 is a signal peptide; that stretch reads MSKAIKILLPLLLFSLSLQA.

The protein belongs to the FlgI family. In terms of assembly, the basal body constitutes a major portion of the flagellar organelle and consists of four rings (L,P,S, and M) mounted on a central rod.

Its subcellular location is the periplasm. The protein resides in the bacterial flagellum basal body. Functionally, assembles around the rod to form the L-ring and probably protects the motor/basal body from shearing forces during rotation. The polypeptide is Flagellar P-ring protein (Wolinella succinogenes (strain ATCC 29543 / DSM 1740 / CCUG 13145 / JCM 31913 / LMG 7466 / NCTC 11488 / FDC 602W) (Vibrio succinogenes)).